We begin with the raw amino-acid sequence, 482 residues long: Dihydrolipoyllysine-residue acetyltransferase component of pyruvate dehydrogenase complex, mitochondrial (482 aa).

The N-terminal 28 residues, 1 to 28 (MSAFVRVVPRISRSSVLTRSLRLQLRCY), are a transit peptide targeting the mitochondrion. The Lipoyl-binding domain occupies 34–110 (HTIIGMPALS…PVNKPIAVYV (77 aa)). The residue at position 75 (lysine 75) is an N6-lipoyllysine. Residues 122–170 (FKLEDSGSDSKTSTKAQPAEPQAEKKQEAPAEETKTSAPEAKKSDVAAP) are disordered. Over residues 143-166 (QAEKKQEAPAEETKTSAPEAKKSD) the composition is skewed to basic and acidic residues. Residues 175 to 212 (FASPLAKTIALEKGISLKDVHGTGPRGRITKADIESYL) enclose the Peripheral subunit-binding (PSBD) domain. Residues 214-251 (KSSKQSSQTSGAAAATPAAATSSTTAGSAPSPSSTASY) form a disordered region. The span at 217 to 250 (KQSSQTSGAAAATPAAATSSTTAGSAPSPSSTAS) shows a compositional bias: low complexity. Catalysis depends on residues histidine 455 and aspartate 459.

Belongs to the 2-oxoacid dehydrogenase family. As to quaternary structure, eukaryotic pyruvate dehydrogenase (PDH) complexes are organized as a core consisting of the oligomeric dihydrolipoamide acetyl-transferase (E2), around which are arranged multiple copies of pyruvate dehydrogenase (E1), dihydrolipoamide dehydrogenase (E3) and protein X (E3BP) bound by non-covalent bonds. The cofactor is (R)-lipoate.

It is found in the mitochondrion matrix. The catalysed reaction is N(6)-[(R)-dihydrolipoyl]-L-lysyl-[protein] + acetyl-CoA = N(6)-[(R)-S(8)-acetyldihydrolipoyl]-L-lysyl-[protein] + CoA. Functionally, the pyruvate dehydrogenase complex catalyzes the overall conversion of pyruvate to acetyl-CoA and CO(2). The chain is Dihydrolipoyllysine-residue acetyltransferase component of pyruvate dehydrogenase complex, mitochondrial (LAT1) from Saccharomyces cerevisiae (strain ATCC 204508 / S288c) (Baker's yeast).